The chain runs to 479 residues: UDP-N-acetylmuramate--L-alanine ligase (479 aa).

126-132 (GTHGKTT) serves as a coordination point for ATP.

This sequence belongs to the MurCDEF family.

It is found in the cytoplasm. It carries out the reaction UDP-N-acetyl-alpha-D-muramate + L-alanine + ATP = UDP-N-acetyl-alpha-D-muramoyl-L-alanine + ADP + phosphate + H(+). It participates in cell wall biogenesis; peptidoglycan biosynthesis. In terms of biological role, cell wall formation. The protein is UDP-N-acetylmuramate--L-alanine ligase of Alkalilimnicola ehrlichii (strain ATCC BAA-1101 / DSM 17681 / MLHE-1).